The chain runs to 201 residues: MEYLIGIQGPDYVLVASDRVAASNIVQMKDDHDKMFKMSEKILLLCVGEAGDTVQFAEYIQKNVQLYKMRNGYELSPTAAANFTRRNLADYLRSRTPYHVNLLLAGYDEHEGPALYYMDYLAALAKAPFAAHGYGAFLTLSILDRYYTPTISREKAVELLRKCLEELQKRFILNLPTFSVRIIDRNGIHDLDNISFPKQGS.

Met1 bears the N-acetylmethionine mark.

It belongs to the peptidase T1B family. The 26S proteasome consists of a 20S proteasome core and two 19S regulatory subunits. The 20S proteasome core is a barrel-shaped complex made of 28 subunits that are arranged in four stacked rings. The two outer rings are each formed by seven alpha subunits, and the two inner rings are formed by seven beta subunits. The proteolytic activity is exerted by three beta-subunits PSMB5, PSMB6 and PSMB7.

The protein resides in the cytoplasm. It is found in the nucleus. Functionally, non-catalytic component of the 20S core proteasome complex involved in the proteolytic degradation of most intracellular proteins. This complex plays numerous essential roles within the cell by associating with different regulatory particles. Associated with two 19S regulatory particles, forms the 26S proteasome and thus participates in the ATP-dependent degradation of ubiquitinated proteins. The 26S proteasome plays a key role in the maintenance of protein homeostasis by removing misfolded or damaged proteins that could impair cellular functions, and by removing proteins whose functions are no longer required. Associated with the PA200 or PA28, the 20S proteasome mediates ubiquitin-independent protein degradation. This type of proteolysis is required in several pathways including spermatogenesis (20S-PA200 complex) or generation of a subset of MHC class I-presented antigenic peptides (20S-PA28 complex). In Bos taurus (Bovine), this protein is Proteasome subunit beta type-2 (PSMB2).